A 222-amino-acid polypeptide reads, in one-letter code: UPF0758 protein HSM_0009 (222 aa).

The region spanning 99–222 (QEFTSPDTVR…YFSFAEQGWI (124 aa)) is the MPN domain. Residues His171, His173, and Asp184 each coordinate Zn(2+). The JAMM motif motif lies at 171-184 (HNHPSGVSTPSMAD).

The protein belongs to the UPF0758 family.

This is UPF0758 protein HSM_0009 from Histophilus somni (strain 2336) (Haemophilus somnus).